The sequence spans 650 residues: Threonine--tRNA ligase (650 aa).

The TGS domain maps to 1–61; it reads MIKITFPDGA…DEDGTLEIVM (61 aa). Residues 242-540 form a catalytic region; it reads DHRKLGKELD…LIETYKGAFP (299 aa). Residues cysteine 336, histidine 387, and histidine 517 each coordinate Zn(2+).

It belongs to the class-II aminoacyl-tRNA synthetase family. In terms of assembly, homodimer. Zn(2+) is required as a cofactor.

The protein resides in the cytoplasm. It carries out the reaction tRNA(Thr) + L-threonine + ATP = L-threonyl-tRNA(Thr) + AMP + diphosphate + H(+). Functionally, catalyzes the attachment of threonine to tRNA(Thr) in a two-step reaction: L-threonine is first activated by ATP to form Thr-AMP and then transferred to the acceptor end of tRNA(Thr). Also edits incorrectly charged L-seryl-tRNA(Thr). This chain is Threonine--tRNA ligase, found in Streptococcus suis (strain 98HAH33).